Consider the following 316-residue polypeptide: Ribosomal RNA small subunit methyltransferase H (316 aa).

S-adenosyl-L-methionine-binding positions include 35–37 (GGH), Asp-55, Phe-79, Asp-101, and Gln-108.

It belongs to the methyltransferase superfamily. RsmH family.

Its subcellular location is the cytoplasm. It carries out the reaction cytidine(1402) in 16S rRNA + S-adenosyl-L-methionine = N(4)-methylcytidine(1402) in 16S rRNA + S-adenosyl-L-homocysteine + H(+). In terms of biological role, specifically methylates the N4 position of cytidine in position 1402 (C1402) of 16S rRNA. This Vibrio parahaemolyticus serotype O3:K6 (strain RIMD 2210633) protein is Ribosomal RNA small subunit methyltransferase H.